The primary structure comprises 284 residues: MLRYKAIVEYDGTNFVGWQRQQNGLSIQQLLEDKISTFTKQTVNLIAAGRTDAGVHALGQVVHFDLIAPNNSKDLACINKETDNKEVSKQNNTTTTIDSLKKMLPCRYNAYKLMSAVNYLLKPHRIILTSCEITTLQFHARFSAKARHYKYRIINRTVPSVIEQNRTWWIKPPLNVIDMIDASQHLIGKHDFTSFRSSACQAKSPLKTLTKIEVDTTNYPEIQIYFSAPSFLHHMVRNIVGTLVYIGLCKISPAAIKTILFAKNRAMAGPTAPSSGLYFVKVDY.

The Nucleophile role is filled by Asp52. Tyr149 serves as a coordination point for substrate.

It belongs to the tRNA pseudouridine synthase TruA family. In terms of assembly, homodimer.

It carries out the reaction uridine(38/39/40) in tRNA = pseudouridine(38/39/40) in tRNA. Its function is as follows. Formation of pseudouridine at positions 38, 39 and 40 in the anticodon stem and loop of transfer RNAs. The chain is tRNA pseudouridine synthase A from Orientia tsutsugamushi (strain Boryong) (Rickettsia tsutsugamushi).